A 76-amino-acid polypeptide reads, in one-letter code: Exodeoxyribonuclease 7 small subunit (76 aa).

Belongs to the XseB family. In terms of assembly, heterooligomer composed of large and small subunits.

The protein localises to the cytoplasm. The enzyme catalyses Exonucleolytic cleavage in either 5'- to 3'- or 3'- to 5'-direction to yield nucleoside 5'-phosphates.. Its function is as follows. Bidirectionally degrades single-stranded DNA into large acid-insoluble oligonucleotides, which are then degraded further into small acid-soluble oligonucleotides. The sequence is that of Exodeoxyribonuclease 7 small subunit from Staphylococcus epidermidis (strain ATCC 35984 / DSM 28319 / BCRC 17069 / CCUG 31568 / BM 3577 / RP62A).